Consider the following 329-residue polypeptide: Glyceraldehyde-3-phosphate dehydrogenase 1 (329 aa).

Residues 11–12, Asp-33, and Glu-77 contribute to the NAD(+) site; that span reads RI. At Ser-148 the chain carries Phosphoserine. 148–150 lines the D-glyceraldehyde 3-phosphate pocket; it reads SCT. The active-site Nucleophile is the Cys-149. Ser-177 carries the post-translational modification Phosphoserine. Thr-179 serves as a coordination point for D-glyceraldehyde 3-phosphate. Ser-200 carries the phosphoserine modification. Residues 208–209 and Arg-231 each bind D-glyceraldehyde 3-phosphate; that span reads TG. Asn-313 is a binding site for NAD(+).

It belongs to the glyceraldehyde-3-phosphate dehydrogenase family. As to quaternary structure, homotetramer.

Its subcellular location is the cytoplasm. The enzyme catalyses D-glyceraldehyde 3-phosphate + phosphate + NAD(+) = (2R)-3-phospho-glyceroyl phosphate + NADH + H(+). It functions in the pathway carbohydrate degradation; glycolysis; pyruvate from D-glyceraldehyde 3-phosphate: step 1/5. In Kluyveromyces marxianus (Yeast), this protein is Glyceraldehyde-3-phosphate dehydrogenase 1.